Here is a 542-residue protein sequence, read N- to C-terminus: 4-coumarate--CoA ligase-like 5 (542 aa).

The ATP site is built by serine 204, serine 205, glycine 206, threonine 207, threonine 208, and lysine 212. Phenylalanine 262 lines the (E)-4-coumaroyl-AMP pocket. Residue arginine 282 participates in CoA binding. The SBD1 stretch occupies residues 284–353 (DFIAALRAIE…SVFPNVELVQ (70 aa)). Residues glycine 331, glutamine 353, glycine 354, and threonine 358 each contribute to the (E)-4-coumaroyl-AMP site. The ATP site is built by glutamine 353, glycine 354, threonine 358, aspartate 418, and arginine 433. The tract at residues 354–397 (GYGLTESSGAVAATVGPEESKAYGSVGKLGSHLQAKIVDPSTGY) is SBD2. Residues lysine 435 and lysine 439 each coordinate (E)-4-coumaroyl-AMP. The CoA site is built by lysine 441 and glycine 442. ATP is bound at residue lysine 524.

Belongs to the ATP-dependent AMP-binding enzyme family. It depends on Mg(2+) as a cofactor.

It carries out the reaction (E)-4-coumarate + ATP + CoA = (E)-4-coumaroyl-CoA + AMP + diphosphate. The catalysed reaction is (E)-4-coumarate + ATP + H(+) = (E)-4-coumaroyl-AMP + diphosphate. It catalyses the reaction (E)-4-coumaroyl-AMP + CoA = (E)-4-coumaroyl-CoA + AMP + H(+). Its function is as follows. Carboxylate--CoA ligase that may use 4-coumarate as substrate. Follows a two-step reaction mechanism, wherein the carboxylate substrate first undergoes adenylation by ATP, followed by a thioesterification in the presence of CoA to yield the final CoA thioester. The chain is 4-coumarate--CoA ligase-like 5 (4CLL5) from Oryza sativa subsp. japonica (Rice).